The primary structure comprises 119 residues: Ribonuclease P protein component (119 aa).

It belongs to the RnpA family. Consists of a catalytic RNA component (M1 or rnpB) and a protein subunit.

The enzyme catalyses Endonucleolytic cleavage of RNA, removing 5'-extranucleotides from tRNA precursor.. RNaseP catalyzes the removal of the 5'-leader sequence from pre-tRNA to produce the mature 5'-terminus. It can also cleave other RNA substrates such as 4.5S RNA. The protein component plays an auxiliary but essential role in vivo by binding to the 5'-leader sequence and broadening the substrate specificity of the ribozyme. In Syntrophus aciditrophicus (strain SB), this protein is Ribonuclease P protein component.